The sequence spans 152 residues: Transposase for insertion sequence element IS200 (152 aa).

His61 and His63 together coordinate Mg(2+). Tyr125 (nucleophile) is an active-site residue. Residue Gln129 participates in Mg(2+) binding.

Belongs to the transposase 17 family. As to quaternary structure, homodimer. Requires Mg(2+) as cofactor.

In terms of biological role, transposase responsible for transposition of the IS200 insertion sequence (IS) element. Transposition occurs in 2 main steps, excision from the donor DNA 'top strand' into a single strand circle and its subsequent reinsertion into the DNA target. This increases the copy number of the IS. The polypeptide is Transposase for insertion sequence element IS200 (tnpA1) (Salmonella typhi).